The chain runs to 119 residues: MSNPNEMTDEEIAAAMEAFDLPQPEPPSTPQAATATDGTLAPSAPAEPSHSASPTLDALDESRRPKAKTVCERCPNSVWFASPAELKCYCRVMFLVTWSSKEPNQLTHCDGEFLGQEEG.

Residues 1 to 67 form a disordered region; that stretch reads MSNPNEMTDE…ALDESRRPKA (67 aa). Low complexity predominate over residues 41–54; the sequence is APSAPAEPSHSASP.

Its function is as follows. The initiation process of transfer DNA synthesis requires the interaction of at least three plasmid-specific components (TraH, TraI, and TraJ) at the transfer origin resulting in the assembly of a specialized nucleoprotein complex - the relaxosome. This is Protein TraH (traH) from Escherichia coli.